The chain runs to 192 residues: Ion-translocating oxidoreductase complex subunit B (192 aa).

The interval 1 to 26 is hydrophobic; that stretch reads MNTIWIAVAAISLLGLAFGAILGYAS. The 4Fe-4S domain occupies 32-91; sequence EDDPVVEKIDEILPQSQCGQCGYPGCRPYAEAISCNGEKINRCAPGGEAVMLKISELLNV. Residues C49, C52, C57, C74, C117, C120, C123, C127, C147, C150, C153, and C157 each coordinate [4Fe-4S] cluster. 4Fe-4S ferredoxin-type domains follow at residues 108 to 137 and 138 to 167; these read VVAVIDENNCIGCTKCIQACPVDAIVGATR and AMHTVMSDLCTGCNLCVDPCPTQCISLQPV.

This sequence belongs to the 4Fe4S bacterial-type ferredoxin family. RnfB subfamily. The complex is composed of six subunits: RsxA, RsxB, RsxC, RsxD, RsxE and RsxG. It depends on [4Fe-4S] cluster as a cofactor.

Its subcellular location is the cell inner membrane. In terms of biological role, part of a membrane-bound complex that couples electron transfer with translocation of ions across the membrane. Required to maintain the reduced state of SoxR. The chain is Ion-translocating oxidoreductase complex subunit B from Escherichia fergusonii (strain ATCC 35469 / DSM 13698 / CCUG 18766 / IAM 14443 / JCM 21226 / LMG 7866 / NBRC 102419 / NCTC 12128 / CDC 0568-73).